The following is a 127-amino-acid chain: Large ribosomal subunit protein bL12 (127 aa).

An N6-methyllysine mark is found at K77 and K88.

The protein belongs to the bacterial ribosomal protein bL12 family. In terms of assembly, homodimer. Part of the ribosomal stalk of the 50S ribosomal subunit. Forms a multimeric L10(L12)X complex, where L10 forms an elongated spine to which 2 to 4 L12 dimers bind in a sequential fashion. Binds GTP-bound translation factors.

Its function is as follows. Forms part of the ribosomal stalk which helps the ribosome interact with GTP-bound translation factors. Is thus essential for accurate translation. This Nitratidesulfovibrio vulgaris (strain DSM 19637 / Miyazaki F) (Desulfovibrio vulgaris) protein is Large ribosomal subunit protein bL12.